Reading from the N-terminus, the 438-residue chain is tRNA-2-methylthio-N(6)-dimethylallyladenosine synthase (438 aa).

The region spanning 3 to 123 (KRLFVKTYGC…LPEMVAQAAR (121 aa)) is the MTTase N-terminal domain. [4Fe-4S] cluster contacts are provided by cysteine 12, cysteine 48, cysteine 86, cysteine 160, cysteine 164, and cysteine 167. Residues 146–374 (HAEGTSAFLS…QALLLDQTMR (229 aa)) enclose the Radical SAM core domain. The region spanning 377–438 (HACVGREMRI…HPNSLEAVPA (62 aa)) is the TRAM domain.

Belongs to the methylthiotransferase family. MiaB subfamily. Monomer. It depends on [4Fe-4S] cluster as a cofactor.

The protein resides in the cytoplasm. It carries out the reaction N(6)-dimethylallyladenosine(37) in tRNA + (sulfur carrier)-SH + AH2 + 2 S-adenosyl-L-methionine = 2-methylsulfanyl-N(6)-dimethylallyladenosine(37) in tRNA + (sulfur carrier)-H + 5'-deoxyadenosine + L-methionine + A + S-adenosyl-L-homocysteine + 2 H(+). Its function is as follows. Catalyzes the methylthiolation of N6-(dimethylallyl)adenosine (i(6)A), leading to the formation of 2-methylthio-N6-(dimethylallyl)adenosine (ms(2)i(6)A) at position 37 in tRNAs that read codons beginning with uridine. The sequence is that of tRNA-2-methylthio-N(6)-dimethylallyladenosine synthase from Paramagnetospirillum magneticum (strain ATCC 700264 / AMB-1) (Magnetospirillum magneticum).